The following is a 149-amino-acid chain: Nucleoside diphosphate kinase 1 (149 aa).

6 residues coordinate ATP: lysine 9, phenylalanine 57, arginine 85, threonine 91, arginine 102, and asparagine 112. The active-site Pros-phosphohistidine intermediate is the histidine 115.

Belongs to the NDK family. Homohexamer. The cofactor is Mg(2+).

The enzyme catalyses a 2'-deoxyribonucleoside 5'-diphosphate + ATP = a 2'-deoxyribonucleoside 5'-triphosphate + ADP. It catalyses the reaction a ribonucleoside 5'-diphosphate + ATP = a ribonucleoside 5'-triphosphate + ADP. Its function is as follows. Major role in the synthesis of nucleoside triphosphates other than ATP. The ATP gamma phosphate is transferred to the NDP beta phosphate via a ping-pong mechanism, using a phosphorylated active-site intermediate. This NDK is microtubule-associated. The protein is Nucleoside diphosphate kinase 1 (NDKR) of Oryza sativa subsp. japonica (Rice).